The primary structure comprises 275 residues: Formamidopyrimidine-DNA glycosylase (275 aa).

The active-site Schiff-base intermediate with DNA is Pro-2. The active-site Proton donor is the Glu-3. The active-site Proton donor; for beta-elimination activity is the Lys-59. 3 residues coordinate DNA: His-92, Arg-111, and Arg-155. The FPG-type zinc finger occupies Asn-240 to Arg-274. The Proton donor; for delta-elimination activity role is filled by Arg-264.

This sequence belongs to the FPG family. In terms of assembly, monomer. Zn(2+) serves as cofactor.

The catalysed reaction is Hydrolysis of DNA containing ring-opened 7-methylguanine residues, releasing 2,6-diamino-4-hydroxy-5-(N-methyl)formamidopyrimidine.. It catalyses the reaction 2'-deoxyribonucleotide-(2'-deoxyribose 5'-phosphate)-2'-deoxyribonucleotide-DNA = a 3'-end 2'-deoxyribonucleotide-(2,3-dehydro-2,3-deoxyribose 5'-phosphate)-DNA + a 5'-end 5'-phospho-2'-deoxyribonucleoside-DNA + H(+). Functionally, involved in base excision repair of DNA damaged by oxidation or by mutagenic agents. Acts as a DNA glycosylase that recognizes and removes damaged bases. Has a preference for oxidized purines, such as 7,8-dihydro-8-oxoguanine (8-oxoG). Has AP (apurinic/apyrimidinic) lyase activity and introduces nicks in the DNA strand. Cleaves the DNA backbone by beta-delta elimination to generate a single-strand break at the site of the removed base with both 3'- and 5'-phosphates. The protein is Formamidopyrimidine-DNA glycosylase of Magnetococcus marinus (strain ATCC BAA-1437 / JCM 17883 / MC-1).